The following is a 158-amino-acid chain: uncharacterized protein (158 aa).

This is an uncharacterized protein from Mycobacterium tuberculosis (strain CDC 1551 / Oshkosh).